A 163-amino-acid polypeptide reads, in one-letter code: Probable chemoreceptor glutamine deamidase CheD (163 aa).

Belongs to the CheD family.

It catalyses the reaction L-glutaminyl-[protein] + H2O = L-glutamyl-[protein] + NH4(+). Functionally, probably deamidates glutamine residues to glutamate on methyl-accepting chemotaxis receptors (MCPs), playing an important role in chemotaxis. The sequence is that of Probable chemoreceptor glutamine deamidase CheD from Borreliella afzelii (strain PKo) (Borrelia afzelii).